The sequence spans 193 residues: Ion-translocating oxidoreductase complex subunit B (193 aa).

The hydrophobic stretch occupies residues 1 to 26; sequence MSTMLIAVILLTLLALFFGVLLGFAA. The 4Fe-4S domain occupies 32–90; the sequence is EGNPIVDELEAILPQTQCGQCGYPGCRPYAEAIANGDKVNKCPPGGTATMEKLASLMGV. [4Fe-4S] cluster is bound by residues cysteine 49, cysteine 52, cysteine 57, cysteine 73, cysteine 114, cysteine 117, cysteine 120, cysteine 124, cysteine 144, cysteine 147, cysteine 150, and cysteine 154. 4Fe-4S ferredoxin-type domains lie at 105-134 and 136-164; these read KVAY…GAGK and MHTV…MVPV.

It belongs to the 4Fe4S bacterial-type ferredoxin family. RnfB subfamily. In terms of assembly, the complex is composed of six subunits: RnfA, RnfB, RnfC, RnfD, RnfE and RnfG. It depends on [4Fe-4S] cluster as a cofactor.

The protein resides in the cell inner membrane. Functionally, part of a membrane-bound complex that couples electron transfer with translocation of ions across the membrane. The sequence is that of Ion-translocating oxidoreductase complex subunit B from Shewanella oneidensis (strain ATCC 700550 / JCM 31522 / CIP 106686 / LMG 19005 / NCIMB 14063 / MR-1).